The primary structure comprises 256 residues: Zinc import ATP-binding protein ZnuC 1 (256 aa).

Residues 5 to 220 (LTLQDVCVVF…PKYIALFGQQ (216 aa)) form the ABC transporter domain. 37-44 (GPNGAGKS) is a binding site for ATP. Residues 232-256 (HHHNHDLSGEPSDGSCCSKNKKAHQ) are disordered.

The protein belongs to the ABC transporter superfamily. Zinc importer (TC 3.A.1.15.5) family. The complex is composed of two ATP-binding proteins (ZnuC), two transmembrane proteins (ZnuB) and a solute-binding protein (ZnuA).

The protein resides in the cell inner membrane. It carries out the reaction Zn(2+)(out) + ATP(in) + H2O(in) = Zn(2+)(in) + ADP(in) + phosphate(in) + H(+)(in). Part of the ABC transporter complex ZnuABC involved in zinc import. Responsible for energy coupling to the transport system. In Aliivibrio fischeri (strain ATCC 700601 / ES114) (Vibrio fischeri), this protein is Zinc import ATP-binding protein ZnuC 1.